The primary structure comprises 198 residues: Recombination protein RecR (198 aa).

The C4-type zinc finger occupies 57 to 72; the sequence is CSICGNITEEDPCEIC. A Toprim domain is found at 80–175; the sequence is SIILVVEEPK…TVTRLAHGLS (96 aa).

The protein belongs to the RecR family.

Its function is as follows. May play a role in DNA repair. It seems to be involved in an RecBC-independent recombinational process of DNA repair. It may act with RecF and RecO. The polypeptide is Recombination protein RecR (Enterococcus faecalis (strain ATCC 700802 / V583)).